The chain runs to 524 residues: Cytochrome P450 1A1 (524 aa).

A mitochondrial targeting signal region spans residues 33 to 44 (WQPRLPKGLKSP). Ser-71 carries an O-linked (GlcNAc) serine glycan. Phe-228 contacts substrate. Residue Cys-461 participates in heme binding.

This sequence belongs to the cytochrome P450 family. In terms of assembly, interacts with cytosolic chaperones HSP70 and HSP90; this interaction is required for initial targeting to mitochondria. Interacts (via mitochondrial targeting signal) with TOMM40 (via N-terminus); this interaction is required for translocation across the mitochondrial outer membrane. Heme serves as cofactor.

It is found in the endoplasmic reticulum membrane. It localises to the mitochondrion inner membrane. The protein resides in the microsome membrane. The protein localises to the cytoplasm. The catalysed reaction is an organic molecule + reduced [NADPH--hemoprotein reductase] + O2 = an alcohol + oxidized [NADPH--hemoprotein reductase] + H2O + H(+). It carries out the reaction estrone + reduced [NADPH--hemoprotein reductase] + O2 = 2-hydroxyestrone + oxidized [NADPH--hemoprotein reductase] + H2O + H(+). It catalyses the reaction estrone + reduced [NADPH--hemoprotein reductase] + O2 = 4-hydroxyestrone + oxidized [NADPH--hemoprotein reductase] + H2O + H(+). The enzyme catalyses estrone + reduced [NADPH--hemoprotein reductase] + O2 = 6alpha-hydroxyestrone + oxidized [NADPH--hemoprotein reductase] + H2O + H(+). The catalysed reaction is estrone + reduced [NADPH--hemoprotein reductase] + O2 = 15alpha-hydroxyestrone + oxidized [NADPH--hemoprotein reductase] + H2O + H(+). It carries out the reaction estrone + reduced [NADPH--hemoprotein reductase] + O2 = 16alpha-hydroxyestrone + oxidized [NADPH--hemoprotein reductase] + H2O + H(+). It catalyses the reaction 17beta-estradiol + reduced [NADPH--hemoprotein reductase] + O2 = 2-hydroxy-17beta-estradiol + oxidized [NADPH--hemoprotein reductase] + H2O + H(+). The enzyme catalyses 17beta-estradiol + reduced [NADPH--hemoprotein reductase] + O2 = 4-hydroxy-17beta-estradiol + oxidized [NADPH--hemoprotein reductase] + H2O + H(+). The catalysed reaction is 17beta-estradiol + reduced [NADPH--hemoprotein reductase] + O2 = 6alpha-hydroxy-17beta-estradiol + oxidized [NADPH--hemoprotein reductase] + H2O + H(+). It carries out the reaction 17beta-estradiol + reduced [NADPH--hemoprotein reductase] + O2 = 7alpha-hydroxy-17beta-estradiol + oxidized [NADPH--hemoprotein reductase] + H2O + H(+). It catalyses the reaction 17beta-estradiol + reduced [NADPH--hemoprotein reductase] + O2 = 15alpha-hydroxy-17beta-estradiol + oxidized [NADPH--hemoprotein reductase] + H2O + H(+). The enzyme catalyses (5Z,8Z,11Z)-eicosatrienoate + reduced [NADPH--hemoprotein reductase] + O2 = 19-hydroxy-(5Z,8Z,11Z)-eicosatrienoate + oxidized [NADPH--hemoprotein reductase] + H2O + H(+). The catalysed reaction is (5Z,8Z,11Z,14Z)-eicosatetraenoate + reduced [NADPH--hemoprotein reductase] + O2 = 16-hydroxy-(5Z,8Z,11Z,14Z)-eicosatetraenoate + oxidized [NADPH--hemoprotein reductase] + H2O + H(+). It carries out the reaction (5Z,8Z,11Z,14Z)-eicosatetraenoate + reduced [NADPH--hemoprotein reductase] + O2 = 17-hydroxy-(5Z,8Z,11Z,14Z)-eicosatetraenoate + oxidized [NADPH--hemoprotein reductase] + H2O + H(+). It catalyses the reaction (5Z,8Z,11Z,14Z)-eicosatetraenoate + reduced [NADPH--hemoprotein reductase] + O2 = 18-hydroxy-(5Z,8Z,11Z,14Z)-eicosatetraenoate + oxidized [NADPH--hemoprotein reductase] + H2O + H(+). The enzyme catalyses (5Z,8Z,11Z,14Z)-eicosatetraenoate + reduced [NADPH--hemoprotein reductase] + O2 = 19-hydroxy-(5Z,8Z,11Z,14Z)-eicosatetraenoate + oxidized [NADPH--hemoprotein reductase] + H2O + H(+). The catalysed reaction is (5Z,8Z,11Z,14Z,17Z)-eicosapentaenoate + reduced [NADPH--hemoprotein reductase] + O2 = 19-hydroxy-(5Z,8Z,11Z,14Z,17Z)-eicosapentaenoate + oxidized [NADPH--hemoprotein reductase] + H2O + H(+). It carries out the reaction (5Z,8Z,11Z,14Z)-eicosatetraenoate + reduced [NADPH--hemoprotein reductase] + O2 = (8R,9S)-epoxy-(5Z,11Z,14Z)-eicosatrienoate + oxidized [NADPH--hemoprotein reductase] + H2O + H(+). It catalyses the reaction (5Z,8Z,11Z,14Z)-eicosatetraenoate + reduced [NADPH--hemoprotein reductase] + O2 = (11R,12S)-epoxy-(5Z,8Z,14Z)-eicosatrienoate + oxidized [NADPH--hemoprotein reductase] + H2O + H(+). The enzyme catalyses (5Z,8Z,11Z,14Z)-eicosatetraenoate + reduced [NADPH--hemoprotein reductase] + O2 = (14S,15R)-epoxy-(5Z,8Z,11Z)-eicosatrienoate + oxidized [NADPH--hemoprotein reductase] + H2O + H(+). The catalysed reaction is (5Z,8Z,11Z,14Z)-eicosatetraenoate + reduced [NADPH--hemoprotein reductase] + O2 = (14R,15S)-epoxy-(5Z,8Z,11Z)-eicosatrienoate + oxidized [NADPH--hemoprotein reductase] + H2O + H(+). It carries out the reaction (5Z,8Z,11Z,14Z,17Z)-eicosapentaenoate + reduced [NADPH--hemoprotein reductase] + O2 = (17R,18S)-epoxy-(5Z,8Z,11Z,14Z)-eicosatetraenoate + oxidized [NADPH--hemoprotein reductase] + H2O + H(+). It catalyses the reaction (4Z,7Z,10Z,13Z,16Z,19Z)-docosahexaenoate + reduced [NADPH--hemoprotein reductase] + O2 = (19S,20R)-epoxy-(4Z,7Z,10Z,13Z,16Z)-docosapentaenoate + oxidized [NADPH--hemoprotein reductase] + H2O + H(+). The enzyme catalyses (4Z,7Z,10Z,13Z,16Z,19Z)-docosahexaenoate + reduced [NADPH--hemoprotein reductase] + O2 = (19R,20S)-epoxy-(4Z,7Z,10Z,13Z,16Z)-docosapentaenoate + oxidized [NADPH--hemoprotein reductase] + H2O + H(+). The catalysed reaction is all-trans-retinol + reduced [NADPH--hemoprotein reductase] + O2 = all-trans-retinal + oxidized [NADPH--hemoprotein reductase] + 2 H2O + H(+). It carries out the reaction all-trans-retinal + reduced [NADPH--hemoprotein reductase] + O2 = all-trans-retinoate + oxidized [NADPH--hemoprotein reductase] + H2O + 2 H(+). It catalyses the reaction (13S)-hydroperoxy-(9Z,11E)-octadecadienoate = 13-oxo-(9Z,11E)-octadecadienoate + H2O. The enzyme catalyses (12S)-hydroperoxy-(5Z,8Z,10E,14Z)-eicosatetraenoate = 12-oxo-(5Z,8Z,10E,14Z)-eicosatetraenoate + H2O. The catalysed reaction is (15S)-hydroperoxy-(5Z,8Z,11Z,13E)-eicosatetraenoate = 15-oxo-(5Z,8Z,11Z,13E)-eicosatetraenoate + H2O. It carries out the reaction (5S)-hydroperoxy-(6E,8Z,11Z,14Z)-eicosatetraenoate = 5-oxo-(6E,8Z,11Z,14Z)-eicosatetraenoate + H2O. It functions in the pathway steroid hormone biosynthesis. It participates in lipid metabolism; fatty acid metabolism. Its pathway is cofactor metabolism; retinol metabolism. Functionally, a cytochrome P450 monooxygenase involved in the metabolism of various endogenous substrates, including fatty acids, steroid hormones and vitamins. Mechanistically, uses molecular oxygen inserting one oxygen atom into a substrate, and reducing the second into a water molecule, with two electrons provided by NADPH via cytochrome P450 reductase (CPR; NADPH-ferrihemoprotein reductase). Catalyzes the hydroxylation of carbon-hydrogen bonds. Exhibits high catalytic activity for the formation of hydroxyestrogens from estrone (E1) and 17beta-estradiol (E2), namely 2-hydroxy E1 and E2, as well as D-ring hydroxylated E1 and E2 at the C15alpha and C16alpha positions. Displays different regioselectivities for polyunsaturated fatty acids (PUFA) hydroxylation. Catalyzes the epoxidation of double bonds of certain PUFA. Converts arachidonic acid toward epoxyeicosatrienoic acid (EET) regioisomers, 8,9-, 11,12-, and 14,15-EET, that function as lipid mediators in the vascular system. Displays an absolute stereoselectivity in the epoxidation of eicosapentaenoic acid (EPA) producing the 17(R),18(S) enantiomer. May play an important role in all-trans retinoic acid biosynthesis in extrahepatic tissues. Catalyzes two successive oxidative transformation of all-trans retinol to all-trans retinal and then to the active form all-trans retinoic acid. May also participate in eicosanoids metabolism by converting hydroperoxide species into oxo metabolites (lipoxygenase-like reaction, NADPH-independent). This chain is Cytochrome P450 1A1 (CYP1A1), found in Canis lupus familiaris (Dog).